A 147-amino-acid polypeptide reads, in one-letter code: Large ribosomal subunit protein bL9 (147 aa).

The protein belongs to the bacterial ribosomal protein bL9 family.

Functionally, binds to the 23S rRNA. The polypeptide is Large ribosomal subunit protein bL9 (Campylobacter jejuni subsp. jejuni serotype O:2 (strain ATCC 700819 / NCTC 11168)).